The primary structure comprises 115 residues: Type 3 secretion system chaperone PscG (115 aa).

It belongs to the YscG family. Forms a stable heterotrimeric complex with PscE and PscF/SctF in the cytoplasm. Co-stabilized by PscE.

The protein resides in the cytoplasm. Functionally, chaperone of the type III secretion system (T3SS), also called injectisome, which is used to inject bacterial effector proteins into eukaryotic host cells, facilitating the establishment and dissemination of infection. Along with PscE, prevents premature polymerization of the PscF/SctF needle protein within the cytoplasm. Required for type III secretion needle assembly. Also required for cytotoxicity by influencing PscF/SctF levels. The polypeptide is Type 3 secretion system chaperone PscG (pscG) (Pseudomonas aeruginosa (strain ATCC 15692 / DSM 22644 / CIP 104116 / JCM 14847 / LMG 12228 / 1C / PRS 101 / PAO1)).